A 450-amino-acid chain; its full sequence is Ammonium transporter Rh type A (450 aa).

The Cytoplasmic segment spans residues 1–4 (MRFK). Residues 5–25 (FSLIALSLEVVMIVSFALFVE) form a helical membrane-spanning segment. Over 26–72 (YETSQNGSQKSASQQNASQQNAAAQQNASQQGNASSPAKEDQFFQLY) the chain is Extracellular. Asn-31, Asn-41, Asn-52, and Asn-58 each carry an N-linked (GlcNAc...) asparagine glycan. The segment at 34–61 (QKSASQQNASQQNAAAQQNASQQGNASS) is disordered. Residues 73–93 (PLFQHVHVMIFVGFGFLMTFL) form a helical membrane-spanning segment. At 94-97 (KKYG) the chain is on the cytoplasmic side. The helical transmembrane segment at 98–118 (FSGVGFNLFLAALGLQWGTIV) threads the bilayer. The Extracellular segment spans residues 119–134 (QGLLHSHGLKFPFRIK). A helical transmembrane segment spans residues 135–155 (NMINADFSTATVLISFGAVLG). The Cytoplasmic segment spans residues 156–159 (KTSP). The chain crosses the membrane as a helical span at residues 160-180 (IQMIIMTILEIAVFAGNEHLV). The Extracellular portion of the chain corresponds to 181 to 189 (TEIFKASDT). The chain crosses the membrane as a helical span at residues 190-210 (GASMTIHAFGAYFGLAVAGVL). Residues 211–229 (YRSGLKHGHPNEESVYHSD) lie on the Cytoplasmic side of the membrane. The helical transmembrane segment at 230 to 250 (LFAMIGTLFLWMFWPSFNSAI) threads the bilayer. The Extracellular segment spans residues 251–260 (AQPENNQYRA). Residues 261-281 (IVNTYMSLAACVITAYALSSL) form a helical membrane-spanning segment. Residues 282-289 (VERRGRLD) lie on the Cytoplasmic side of the membrane. Residues 290 to 307 (MVHIQNATLAGGVAVGTC) form a helical membrane-spanning segment. The Extracellular segment spans residues 308 to 311 (ADME). A helical membrane pass occupies residues 312-332 (IPLYFAMTIGSIAGIISVLGY). The Cytoplasmic portion of the chain corresponds to 333–349 (KFLSPLLAHKLMIHDTC). A helical membrane pass occupies residues 350–370 (GVHNLHGLPGVFGGLASIVAI). Over 371–384 (SWGKSTVSTMAMQA) the chain is Extracellular. The chain crosses the membrane as a helical span at residues 385–405 (TALGSSIGSAIVGGLVTGLIL). At 406–450 (KLPVWNQPPDEYCFDDSVSWKVPKYRELDNYFFQHVTHNHVEHEV) the chain is on the cytoplasmic side.

The protein belongs to the ammonium transporter (TC 2.A.49) family. Rh subfamily. As to quaternary structure, homodimer. Heterotrimer; a RHCE monomer interacts with a RHAG homodimer. Component of the ankyrin-1 complex in the erythrocyte, composed of ANK1, RHCE, RHAG, SLC4A1, EPB42, GYPA, GYPB and AQP1. Interacts with GYPB (via the N-terminal); this interaction bridges the (RHAG)2(RHCE) heterotrimer with the SLC4A1 Band 3 I dimer complexed with GYPA. Post-translationally, glycosylated.

It is found in the membrane. The enzyme catalyses methylamine(out) = methylamine(in). It carries out the reaction NH4(+)(in) = NH4(+)(out). The catalysed reaction is CO2(out) = CO2(in). In terms of biological role, component of the ankyrin-1 complex, a multiprotein complex involved in the stability and shape of the erythrocyte membrane. Heterotrimer with RHCE (RHAG)2(RHCE), that transports ammonium and its related derivative methylammonium, in both neutral and ionic forms, across the erythrocyte membrane. The transport of NH4(+) is electrogenic and masks the NH3 transport. Also, may act as a CO2 channel. Moreover in erythrocyte, regulates RHD membrane expression and is associated with rhesus blood group antigen expression. This Rattus norvegicus (Rat) protein is Ammonium transporter Rh type A.